A 108-amino-acid chain; its full sequence is Nucleoid-associated protein Bphy_0952 (108 aa).

A disordered region spans residues 87–108 (AQEKMGGMTSGLPLPPGFKLPF). Positions 99-108 (PLPPGFKLPF) are enriched in pro residues.

It belongs to the YbaB/EbfC family. Homodimer.

It is found in the cytoplasm. It localises to the nucleoid. In terms of biological role, binds to DNA and alters its conformation. May be involved in regulation of gene expression, nucleoid organization and DNA protection. This Paraburkholderia phymatum (strain DSM 17167 / CIP 108236 / LMG 21445 / STM815) (Burkholderia phymatum) protein is Nucleoid-associated protein Bphy_0952.